We begin with the raw amino-acid sequence, 652 residues long: Oligopeptide-binding protein AliB (652 aa).

An N-terminal signal peptide occupies residues 1–24 (MKKSKSKYLTLAGLVLGTGVLLSA). C25 carries N-palmitoyl cysteine lipidation. C25 is lipidated: S-diacylglycerol cysteine.

The protein belongs to the bacterial solute-binding protein 5 family.

The protein localises to the cell membrane. In terms of biological role, part of the binding-protein-dependent transport system for oligopeptides; probably an oligopeptide binding protein. This is Oligopeptide-binding protein AliB (aliB) from Streptococcus pneumoniae serotype 4 (strain ATCC BAA-334 / TIGR4).